The primary structure comprises 347 residues: NADH-ubiquinone oxidoreductase chain 2 (347 aa).

A run of 11 helical transmembrane segments spans residues 1–21 (MNPL…SIIL), 25–45 (HWFM…PVLM), 59–79 (YFLT…INLM), 96–116 (LLIT…FWVP), 122–142 (VSLQ…LAVM), 145–165 (IFAS…IMIG), 178–198 (IMAY…IYNP), 200–220 (LMLL…MMFM), 242–262 (VLMM…GFMP), 274–294 (NSVI…FFYM), and 325–345 (LLAP…MFIL).

It belongs to the complex I subunit 2 family. In terms of assembly, core subunit of respiratory chain NADH dehydrogenase (Complex I) which is composed of 45 different subunits. Interacts with TMEM242.

The protein resides in the mitochondrion inner membrane. The catalysed reaction is a ubiquinone + NADH + 5 H(+)(in) = a ubiquinol + NAD(+) + 4 H(+)(out). Functionally, core subunit of the mitochondrial membrane respiratory chain NADH dehydrogenase (Complex I) which catalyzes electron transfer from NADH through the respiratory chain, using ubiquinone as an electron acceptor. Essential for the catalytic activity and assembly of complex I. This chain is NADH-ubiquinone oxidoreductase chain 2, found in Myosorex kihaulei (Kihaule's mouse shrew).